Reading from the N-terminus, the 141-residue chain is Large ribosomal subunit protein uL11 (141 aa).

This sequence belongs to the universal ribosomal protein uL11 family. In terms of assembly, part of the ribosomal stalk of the 50S ribosomal subunit. Interacts with L10 and the large rRNA to form the base of the stalk. L10 forms an elongated spine to which L12 dimers bind in a sequential fashion forming a multimeric L10(L12)X complex. One or more lysine residues are methylated.

Its function is as follows. Forms part of the ribosomal stalk which helps the ribosome interact with GTP-bound translation factors. This Streptococcus suis (strain 05ZYH33) protein is Large ribosomal subunit protein uL11.